The following is a 427-amino-acid chain: Putative F-box protein At4g10740 (427 aa).

The region spanning 2–47 (RTTMSNLPKELVEDIVSRVPLHCLRAMRLTCKNWNALLESQSFKKM) is the F-box domain.

This chain is Putative F-box protein At4g10740, found in Arabidopsis thaliana (Mouse-ear cress).